We begin with the raw amino-acid sequence, 153 residues long: MKFLFAFNFFSLYIYLYEFLCIHLCGSQVTPAGTVLNSNSALISRRINRRKMKNCNNNDLLKVLKMETTYNELPAHNLLMSSKNDINKLFDYINKNEELSKLMNSCGTYVYLKYLGVVIFSIKENVQISHLSEFIQYLLNKNVCIEFNQNVML.

The first 27 residues, 1 to 27 (MKFLFAFNFFSLYIYLYEFLCIHLCGS), serve as a signal peptide directing secretion. The interval 127 to 153 (QISHLSEFIQYLLNKNVCIEFNQNVML) is dispensable for parasite growth in host erythrocytes.

It localises to the secreted. Its subcellular location is the parasitophorous vacuole lumen. The protein localises to the cell membrane. In terms of biological role, acts as a specific inhibitor of subtilisin-like protease SUB1. The chain is Subtilisin propeptide-like protein from Plasmodium falciparum (isolate 3D7).